A 474-amino-acid polypeptide reads, in one-letter code: tRNA-2-methylthio-N(6)-dimethylallyladenosine synthase (474 aa).

The MTTase N-terminal domain occupies 3-120; it reads KKLHIKTWGC…LPEMIEQVRR (118 aa). Residues cysteine 12, cysteine 49, cysteine 83, cysteine 157, cysteine 161, and cysteine 164 each contribute to the [4Fe-4S] cluster site. The 233-residue stretch at 143 to 375 folds into the Radical SAM core domain; sequence RAEGPTAFVS…QDRITQQAMR (233 aa). The TRAM domain maps to 378–441; sequence RHMMGTVQRI…TNSLRGVFIR (64 aa).

Belongs to the methylthiotransferase family. MiaB subfamily. In terms of assembly, monomer. Requires [4Fe-4S] cluster as cofactor.

It localises to the cytoplasm. The enzyme catalyses N(6)-dimethylallyladenosine(37) in tRNA + (sulfur carrier)-SH + AH2 + 2 S-adenosyl-L-methionine = 2-methylsulfanyl-N(6)-dimethylallyladenosine(37) in tRNA + (sulfur carrier)-H + 5'-deoxyadenosine + L-methionine + A + S-adenosyl-L-homocysteine + 2 H(+). Catalyzes the methylthiolation of N6-(dimethylallyl)adenosine (i(6)A), leading to the formation of 2-methylthio-N6-(dimethylallyl)adenosine (ms(2)i(6)A) at position 37 in tRNAs that read codons beginning with uridine. The chain is tRNA-2-methylthio-N(6)-dimethylallyladenosine synthase from Shewanella baltica (strain OS155 / ATCC BAA-1091).